We begin with the raw amino-acid sequence, 240 residues long: 3-deoxy-D-manno-octulosonic acid kinase (240 aa).

The active site involves Asp170.

This sequence belongs to the protein kinase superfamily. KdkA/RfaP family.

It is found in the cell inner membrane. It carries out the reaction an alpha-Kdo-(2-&gt;6)-lipid IVA + ATP = a 4-O-phospho-alpha-Kdo-(2-&gt;6)-lipid IVA + ADP + H(+). It participates in bacterial outer membrane biogenesis; LPS core biosynthesis. Catalyzes the ATP-dependent phosphorylation of the 3-deoxy-D-manno-octulosonic acid (Kdo) residue in Kdo-lipid IV(A) at the 4-OH position. The sequence is that of 3-deoxy-D-manno-octulosonic acid kinase from Actinobacillus succinogenes (strain ATCC 55618 / DSM 22257 / CCUG 43843 / 130Z).